Consider the following 519-residue polypeptide: Probable WRKY transcription factor 33 (519 aa).

Disordered regions lie at residues 1-34 (MAAS…STSS) and 123-212 (SSGV…CTFP). A compositionally biased stretch (polar residues) spans 7–34 (TMDNSRTRQNMNGSANWSQQSGRTSTSS). A compositionally biased stretch (low complexity) spans 130–142 (TTTTTTTTTTTTT). Residues 164 to 174 (TETRPNNQAVS) are compositionally biased toward polar residues. The span at 178 to 188 (REQRKGEDGYN) shows a compositional bias: basic and acidic residues. The WRKY 1 DNA-binding region spans 178-242 (REQRKGEDGY…YKGSHNHPKP (65 aa)). 4 residues coordinate Zn(2+): Cys-209, Cys-214, His-237, and His-239. Disordered stretches follow at residues 232-255 (VYKG…SSTF) and 267-349 (NRQA…REPR). The segment covering 245–254 (TRRSSSSSST) has biased composition (low complexity). Residues 269 to 299 (QASSDQPNSNNSFHQSDSFGMQQEDNTTSDS) show a composition bias toward polar residues. Over residues 323–332 (PEAKRWKGDN) the composition is skewed to basic and acidic residues. The WRKY 2 DNA-binding region spans 356–421 (SDIDILDDGY…YEGKHNHDVP (66 aa)). Cys-387, Cys-392, His-416, and His-418 together coordinate Zn(2+).

The protein belongs to the WRKY group I family. Interacts with MKS1. Interacts with ATG18A. Interacts with SIB1 and SIB2. Interacts with VQ1 and VQ10. Post-translationally, phosphorylated by MPK4. Phosphorylated on serine residues by MPK3 and MPK6 following infection with the necrotrophic fungal pathogen B.cinerea. Highly expressed in roots, leaves and flowers, and at lower levels in stems, siliques and seeds.

The protein resides in the nucleus. Its function is as follows. Transcription factor. Interacts specifically with the W box (5'-TTGAC[CT]-3'), a frequently occurring elicitor-responsive cis-acting element. Involved in defense responses. Required for resistance to the necrotrophic fungal pathogen B.cinerea. Regulates the antagonistic relationship between defense pathways mediating responses to the bacterial pathogen P. syringae and the necrotrophic pathogen B.cinerea. Required for the phytoalexin camalexin synthesis following infection with B.cinerea. Acts as a positive regulator of the camalexin biosynthetic genes PAD3 (CYP71B15) and CYP71A13 by binding to their promoters. Acts downstream of MPK3 and MPK6 in reprogramming the expression of camalexin biosynthetic genes, which drives the metabolic flow to camalexin production. Functions with WRKY25 as positive regulator of salt stress response and abscisic acid (ABA) signaling. Functions with WRKY25 and WRKY26 as positive regulator of plant thermotolerance by partially participating in ethylene-response signal transduction pathway. The DNA-binding activity of WRKY33 is increased by SIB1 and SIB2. The sequence is that of Probable WRKY transcription factor 33 (WRKY33) from Arabidopsis thaliana (Mouse-ear cress).